Consider the following 124-residue polypeptide: Ribonuclease pancreatic (124 aa).

Positions 1–13 are enriched in basic and acidic residues; sequence KETAAAKFERQHM. A disordered region spans residues 1 to 22; the sequence is KETAAAKFERQHMDSSTSAASS. Substrate is bound by residues K7 and R10. H12 functions as the Proton acceptor in the catalytic mechanism. Intrachain disulfides connect C26-C84, C40-C95, C58-C110, and C65-C72. N-linked (GlcNAc...) asparagine glycosylation occurs at N34. Substrate contacts are provided by residues 41 to 45, K66, and R85; that span reads KPVNT. H119 functions as the Proton donor in the catalytic mechanism.

The protein belongs to the pancreatic ribonuclease family. As to quaternary structure, monomer. Interacts with and forms tight 1:1 complexes with RNH1. Dimerization of two such complexes may occur. Interaction with RNH1 inhibits this protein. In terms of tissue distribution, pancreas.

The protein localises to the secreted. The enzyme catalyses an [RNA] containing cytidine + H2O = an [RNA]-3'-cytidine-3'-phosphate + a 5'-hydroxy-ribonucleotide-3'-[RNA].. It carries out the reaction an [RNA] containing uridine + H2O = an [RNA]-3'-uridine-3'-phosphate + a 5'-hydroxy-ribonucleotide-3'-[RNA].. In terms of biological role, endonuclease that catalyzes the cleavage of RNA on the 3' side of pyrimidine nucleotides. Acts on single-stranded and double-stranded RNA. The polypeptide is Ribonuclease pancreatic (RNASE1) (Bison bison (American bison)).